The sequence spans 1057 residues: Desmoglein-1-alpha (1057 aa).

An N-terminal signal peptide occupies residues 1-23 (MDWHSFRIAALLLTSLVVLEVNS). A propeptide spanning residues 24–49 (EFQIQVRDHNAKNGTIKWHSIRRQKR) is cleaved from the precursor. Cadherin domains lie at 50–157 (EWIK…PPVF), 158–269 (SMTT…IPYL), 270–389 (EQSS…RPGS), and 386–493 (RPGS…TGSE). The Extracellular portion of the chain corresponds to 50 to 564 (EWIKFAAACR…LYGDNVHFGP (515 aa)). 2 N-linked (GlcNAc...) asparagine glycosylation sites follow: Asn110 and Asn180. Residues 490-552 (TGSESGGSSS…FQGDPDETLE (63 aa)) are disordered. Residues 510 to 525 (NGYQGTSSTENPQRVT) are compositionally biased toward polar residues. Residues 565–585 (AGIGLLIMGFLVLGLVPFLLI) traverse the membrane as a helical segment. Topologically, residues 586-1057 (CCDCGGAPGG…TKYNTVQYSK (472 aa)) are cytoplasmic. 5 Desmoglein repeat repeats span residues 832 to 858 (AYHS…TVRE), 859 to 888 (SYTT…ERVV), 889 to 918 (GPIS…ERVI), 919 to 946 (APGS…ERVI), and 947 to 975 (QPTS…ERVV).

In terms of assembly, binds to JUP/plakoglobin. Interacts with PKP2. Interacts with DSC3; there is evidence to suggest that the interaction promotes cell-cell adhesion of keratinocytes. In terms of tissue distribution, expressed in testis.

It is found in the cell membrane. The protein localises to the cell junction. Its subcellular location is the desmosome. It localises to the cytoplasm. The protein resides in the nucleus. Functionally, component of intercellular desmosome junctions. Involved in the interaction of plaque proteins and intermediate filaments mediating cell-cell adhesion. This chain is Desmoglein-1-alpha (Dsg1a), found in Mus musculus (Mouse).